We begin with the raw amino-acid sequence, 182 residues long: Gremlin-1 (182 aa).

Positions M1–G24 are cleaved as a signal peptide. Residues E23–A65 are disordered. N-linked (GlcNAc...) asparagine glycosylation is present at N44. Cystine bridges form between C92–C142, C106–C156, C116–C174, and C120–C176. The CTCK domain occupies C92 to D182.

This sequence belongs to the DAN family.

It is found in the secreted. Its function is as follows. Cytokine that has an axial patterning activity. Acts like BMP antagonist in embryonic explants. Blocks the BMP2 activity. The sequence is that of Gremlin-1 (grem1) from Xenopus laevis (African clawed frog).